A 273-amino-acid polypeptide reads, in one-letter code: Large ribosomal subunit protein uL2cz/uL2cy (273 aa).

Disordered stretches follow at residues Met1 to Arg20 and Pro225 to Lys273.

The protein belongs to the universal ribosomal protein uL2 family. As to quaternary structure, part of the 50S ribosomal subunit.

Its subcellular location is the plastid. The protein localises to the chloroplast. This chain is Large ribosomal subunit protein uL2cz/uL2cy (rpl2-A), found in Oryza nivara (Indian wild rice).